The following is a 233-amino-acid chain: ASEGNGRGPYVQADLAYAAERITHDYPEATAQKKGTTISTVSDYFRNIRTHSVHPRVSVGYDFGGWRIAADYARYRKWNNSKYSVSIKKLQNQYNKKTENQENGTFHAASSLGLSAVYDFKLNDKFKPYIGARVAYGHVRHSIDSTKKTTGFLTTAGARGAAPTVSSPYKNTQDAHQESNSIRRVGLGVIAGVGFDITPNLTLDAGYRYHNWGRLENTRFKTHEASLGVRYRF.

Residue Ala1 is a signal peptide.

Belongs to the opacity porin family.

The protein localises to the cell outer membrane. Functionally, implicated in a number of adherence functions. OPA proteins are implicated in pathogenesis and are subject to phase variation. The protein is Opacity protein opA67 of Neisseria gonorrhoeae.